The following is a 268-amino-acid chain: Octanoyltransferase (268 aa).

The region spanning G49–L237 is the BPL/LPL catalytic domain. Substrate is bound by residues R87 to H94, A167 to G169, and G180 to A182. The Acyl-thioester intermediate role is filled by C198.

The protein belongs to the LipB family.

Its subcellular location is the cytoplasm. The enzyme catalyses octanoyl-[ACP] + L-lysyl-[protein] = N(6)-octanoyl-L-lysyl-[protein] + holo-[ACP] + H(+). It participates in protein modification; protein lipoylation via endogenous pathway; protein N(6)-(lipoyl)lysine from octanoyl-[acyl-carrier-protein]: step 1/2. Its function is as follows. Catalyzes the transfer of endogenously produced octanoic acid from octanoyl-acyl-carrier-protein onto the lipoyl domains of lipoate-dependent enzymes. Lipoyl-ACP can also act as a substrate although octanoyl-ACP is likely to be the physiological substrate. The sequence is that of Octanoyltransferase from Corynebacterium aurimucosum (strain ATCC 700975 / DSM 44827 / CIP 107346 / CN-1) (Corynebacterium nigricans).